The sequence spans 360 residues: MKTSMQRKLDQLSVRLAELNDLLSRENVTADLDQYRKLTREHAELGPVVEQYALWRQSRNDEAAAQELLADASMRDFAEEAIRSARERMTRLEGELQKMLLPKDPNDDRNIFLEIRAGTGGDESALFAGDLLRMYLRYAERQRWQVEMMSESPSDLGGYKEVIVRIAGQGAYSRLKFESGGHRVQRVPATETQGRIHTSACTVAVMPEADEIGEVEINPADLRIDTFRASGAGGQHINKTDSAVRVTHIPTGIVVECQDDRSQHKNKDRALKVLAARIKDKQYHEQHAKEAATRKSLIGSGDRSERIRTYNFPQGRMTDHRINLTLYRLEALMDGDLDELIGALVSEHQAELLASLGDAD.

Residue Gln235 is modified to N5-methylglutamine.

It belongs to the prokaryotic/mitochondrial release factor family. Methylated by PrmC. Methylation increases the termination efficiency of RF1.

The protein localises to the cytoplasm. In terms of biological role, peptide chain release factor 1 directs the termination of translation in response to the peptide chain termination codons UAG and UAA. In Burkholderia vietnamiensis (strain G4 / LMG 22486) (Burkholderia cepacia (strain R1808)), this protein is Peptide chain release factor 1.